The sequence spans 174 residues: UPF0316 protein lwe1794 (174 aa).

3 helical membrane-spanning segments follow: residues 4 to 24 (GLFIVVTIFVVNILYVTIYTV), 36 to 56 (LAALSSVFEMIIYVVALSLVL), and 62 to 82 (IANVLAYAIGFGVGVIVGMKI).

This sequence belongs to the UPF0316 family.

The protein resides in the cell membrane. This is UPF0316 protein lwe1794 from Listeria welshimeri serovar 6b (strain ATCC 35897 / DSM 20650 / CCUG 15529 / CIP 8149 / NCTC 11857 / SLCC 5334 / V8).